The primary structure comprises 354 residues: Replication factor C subunit 5 (354 aa).

ATP is bound by residues valine 5, serine 17, 43–51 (GPNGTGKKT), and arginine 231.

The protein belongs to the activator 1 small subunits family. As to quaternary structure, replication factor C (RFC) is a heteropentamer of subunits RFC1, RFC2, RFC3, RFC4 and RFC5 and forms a complex with POL30/PCNA in the presence of ATP. Component of the RAD24-RFC complex which consists of RAD24, RFC2, RFC3, RFC4 and RFC5 and associates with the checkpoint clamp DDC1:MEC3:RAD17 complex. Component of the ELG1-RFC complex which consists of ELG1, RFC2, RFC3, RFC4 and RFC5. Component of the CTF18-RFC complex, which consists of CTF18, CTF8, DCC1, RFC2, RFC3, RFC4 and RFC5. RFC5 interacts with ECO1.

The protein resides in the nucleus. Component of ATP-dependent clamp loader (RFC and RFC-like) complexes for DNA clamps, such as the POL30/PCNA homotrimer and the checkpoint clamp DDC1:MEC3:RAD17 complex. During a clamp loading circle, the RFC:clamp complex binds to DNA and the recognition of the double-stranded/single-stranded junction stimulates ATP hydrolysis by RFC. The complex presumably provides bipartite ATP sites in which one subunit supplies a catalytic site for hydrolysis of ATP bound to the neighboring subunit. Dissociation of RFC from the clamp leaves the clamp encircling DNA. Component of the replication factor C (RFC or activator 1) complex which loads POL30/PCNA and acts during elongation of primed DNA templates by DNA polymerase delta and epsilon. RFC has an essential but redundant activity in sister chromatid cohesion establishment. Component of the RFC-like complex CTF18-RFC which is required for efficient establishment of chromosome cohesion during S-phase and may load or unload POL30/PCNA. Component of the RFC-like RAD24-RFC complex which loads the checkpoint clamp DDC1:MEC3:RAD17 complex and is involved in DNA repair pathways. Component of the RFC-like ELG1-RFC complex which appears to have a role in DNA replication, replication fork re-start, recombination and repair. This Saccharomyces cerevisiae (strain ATCC 204508 / S288c) (Baker's yeast) protein is Replication factor C subunit 5 (RFC5).